Consider the following 403-residue polypeptide: Histidine--tRNA ligase (403 aa).

Belongs to the class-II aminoacyl-tRNA synthetase family. Homodimer.

Its subcellular location is the cytoplasm. The catalysed reaction is tRNA(His) + L-histidine + ATP = L-histidyl-tRNA(His) + AMP + diphosphate + H(+). This is Histidine--tRNA ligase from Sulfurimonas denitrificans (strain ATCC 33889 / DSM 1251) (Thiomicrospira denitrificans (strain ATCC 33889 / DSM 1251)).